We begin with the raw amino-acid sequence, 867 residues long: Protein melted homolog (867 aa).

Residues Met480–Thr505 are disordered. The 108-residue stretch at Glu753–Ala860 folds into the PH domain.

The protein belongs to the MELT/VEPH family.

The protein localises to the cell membrane. In Caenorhabditis briggsae, this protein is Protein melted homolog.